Consider the following 595-residue polypeptide: Aspartate--tRNA(Asp/Asn) ligase (595 aa).

Glutamate 174 lines the L-aspartate pocket. The tract at residues 198-201 (QLFK) is aspartate. Residue arginine 220 participates in L-aspartate binding. ATP is bound by residues 220–222 (RDE) and glutamine 229. Residue histidine 456 coordinates L-aspartate. Glutamate 486 lines the ATP pocket. Residue arginine 493 coordinates L-aspartate. 538-541 (GFDR) is a binding site for ATP.

The protein belongs to the class-II aminoacyl-tRNA synthetase family. Type 1 subfamily. In terms of assembly, homodimer.

The protein localises to the cytoplasm. The enzyme catalyses tRNA(Asx) + L-aspartate + ATP = L-aspartyl-tRNA(Asx) + AMP + diphosphate. In terms of biological role, aspartyl-tRNA synthetase with relaxed tRNA specificity since it is able to aspartylate not only its cognate tRNA(Asp) but also tRNA(Asn). Reaction proceeds in two steps: L-aspartate is first activated by ATP to form Asp-AMP and then transferred to the acceptor end of tRNA(Asp/Asn). This chain is Aspartate--tRNA(Asp/Asn) ligase, found in Gloeobacter violaceus (strain ATCC 29082 / PCC 7421).